The following is a 480-amino-acid chain: ESX-1 secretion system ATPase EccB1 (480 aa).

Residues I44 to F64 form a helical membrane-spanning segment. The segment at D461–P480 is disordered.

The protein belongs to the EccB family. Part of the ESX-1 / type VII secretion system (T7SS), which is composed of cytosolic and membrane components. The ESX-1 membrane complex is composed of EccB1, EccCa1, EccCb1, EccD1 and EccE1.

The protein resides in the cell inner membrane. Its function is as follows. An ATPase. Part of the ESX-1 specialized secretion system, which delivers several virulence factors to host cells during infection, including the key virulence factors EsxA (ESAT-6) and EsxB (CFP-10). The polypeptide is ESX-1 secretion system ATPase EccB1 (Mycobacterium tuberculosis (strain CDC 1551 / Oshkosh)).